A 429-amino-acid chain; its full sequence is Enolase (429 aa).

Glutamine 167 is a binding site for (2R)-2-phosphoglycerate. Catalysis depends on glutamate 209, which acts as the Proton donor. Residues aspartate 246, glutamate 289, and aspartate 316 each coordinate Mg(2+). Residues lysine 341, arginine 370, serine 371, and lysine 392 each contribute to the (2R)-2-phosphoglycerate site. Lysine 341 (proton acceptor) is an active-site residue.

It belongs to the enolase family. Component of the RNA degradosome, a multiprotein complex involved in RNA processing and mRNA degradation. Mg(2+) serves as cofactor.

It is found in the cytoplasm. Its subcellular location is the secreted. It localises to the cell surface. The enzyme catalyses (2R)-2-phosphoglycerate = phosphoenolpyruvate + H2O. Its pathway is carbohydrate degradation; glycolysis; pyruvate from D-glyceraldehyde 3-phosphate: step 4/5. Catalyzes the reversible conversion of 2-phosphoglycerate (2-PG) into phosphoenolpyruvate (PEP). It is essential for the degradation of carbohydrates via glycolysis. In Pseudomonas aeruginosa (strain LESB58), this protein is Enolase.